The following is a 552-amino-acid chain: Urocanate hydratase (552 aa).

NAD(+) is bound by residues 49-50, Gln-127, 173-175, Asp-193, 239-240, 260-264, 270-271, and Tyr-319; these read GG, GMG, NA, QTSAH, and YI. Cys-407 is a catalytic residue. Gly-489 contributes to the NAD(+) binding site.

This sequence belongs to the urocanase family. Requires NAD(+) as cofactor.

The protein localises to the cytoplasm. It carries out the reaction 4-imidazolone-5-propanoate = trans-urocanate + H2O. The protein operates within amino-acid degradation; L-histidine degradation into L-glutamate; N-formimidoyl-L-glutamate from L-histidine: step 2/3. Its function is as follows. Catalyzes the conversion of urocanate to 4-imidazolone-5-propionate. In Bacillus mycoides (strain KBAB4) (Bacillus weihenstephanensis), this protein is Urocanate hydratase.